The primary structure comprises 80 residues: Defensin-like protein 276 (80 aa).

The signal sequence occupies residues 1–24; that stretch reads MSGQKYQLVSLLLIICLLFSQSTA. 4 disulfides stabilise this stretch: cysteine 27–cysteine 67, cysteine 33–cysteine 55, cysteine 39–cysteine 65, and cysteine 43–cysteine 66.

Belongs to the DEFL family.

It is found in the secreted. The sequence is that of Defensin-like protein 276 from Arabidopsis thaliana (Mouse-ear cress).